Here is a 702-residue protein sequence, read N- to C-terminus: Lipase maturation factor 2 (702 aa).

10 consecutive transmembrane segments (helical) span residues 10 to 30, 75 to 95, 102 to 122, 123 to 143, 164 to 184, 226 to 246, 259 to 279, 316 to 336, 363 to 383, and 396 to 416; these read LFLQGVAAVYLFAFASLYTQI, AQGLDLLTLLGTVLALGALLL, FIYLLLWAAYLSACQVGQVFL, YFQWDSLLLETGFLAILVAPL, DLPFWLVRWLLFRLMFASGVV, LSVVATFLIEIAVPPLFFAPI, LLQILIIITGNYNFFNLLTLV, LMLELTVYGLLAYGTIYYFGL, VTLPTVWLGTASLAWELLIAL, and FFAGIQLSVLGTATVFLFLIS. Asn488 is a glycosylation site (N-linked (GlcNAc...) asparagine). Residues 628–648 form a helical membrane-spanning segment; it reads QLSPLEPSILLWGLLGAVVAI. The interval 660–702 is disordered; it reads LQSSKQTREEKRKQAPKKDSRAVSEQTAPNSNSNGSWAPRRKK. A compositionally biased stretch (basic and acidic residues) spans 665–681; that stretch reads QTREEKRKQAPKKDSRA. A compositionally biased stretch (polar residues) spans 682–695; the sequence is VSEQTAPNSNSNGS.

It belongs to the lipase maturation factor family.

It localises to the endoplasmic reticulum membrane. In terms of biological role, involved in the maturation of specific proteins in the endoplasmic reticulum. May be required for maturation and transport of active lipoprotein lipase (LPL) through the secretory pathway. The chain is Lipase maturation factor 2 (Lmf2) from Rattus norvegicus (Rat).